The sequence spans 500 residues: Cysteine-rich secretory protein LCCL domain-containing 1 (500 aa).

Positions 1–23 (MMCKAQEWLRVTALLFVARAVPA) are cleaved as a signal peptide. The region spanning 66–206 (LDLHNKLRSQ…PKAVYLVCNY (141 aa)) is the SCP domain. Residues 258-281 (EIERQQSQVHDTHVRTRSDDSDRN) are disordered. LCCL domains follow at residues 289-384 (MSQI…ANSF) and 390-492 (TVQA…TGGK). 4 disulfide bridges follow: Cys295–Cys313, Cys317–Cys337, Cys396–Cys418, and Cys422–Cys445.

It belongs to the CRISP family.

The protein localises to the secreted. The sequence is that of Cysteine-rich secretory protein LCCL domain-containing 1 (Crispld1) from Mus musculus (Mouse).